Here is a 438-residue protein sequence, read N- to C-terminus: Ribosomal protein uS12 methylthiotransferase RimO (438 aa).

The region spanning 4–120 (HSLFLLSLGC…ILASLGARYR (117 aa)) is the MTTase N-terminal domain. 6 residues coordinate [4Fe-4S] cluster: C13, C49, C83, C144, C148, and C151. The Radical SAM core domain maps to 130-359 (LTPSHYAYLK…MELQEAVAES (230 aa)). One can recognise a TRAM domain in the interval 362–429 (REFEGKEIEV…AHELYGEIVQ (68 aa)).

This sequence belongs to the methylthiotransferase family. RimO subfamily. It depends on [4Fe-4S] cluster as a cofactor.

It localises to the cytoplasm. It carries out the reaction L-aspartate(89)-[ribosomal protein uS12]-hydrogen + (sulfur carrier)-SH + AH2 + 2 S-adenosyl-L-methionine = 3-methylsulfanyl-L-aspartate(89)-[ribosomal protein uS12]-hydrogen + (sulfur carrier)-H + 5'-deoxyadenosine + L-methionine + A + S-adenosyl-L-homocysteine + 2 H(+). Its function is as follows. Catalyzes the methylthiolation of an aspartic acid residue of ribosomal protein uS12. This Chlorobium chlorochromatii (strain CaD3) protein is Ribosomal protein uS12 methylthiotransferase RimO.